The sequence spans 458 residues: Argininosuccinate lyase (458 aa).

It belongs to the lyase 1 family. Argininosuccinate lyase subfamily.

It localises to the cytoplasm. It catalyses the reaction 2-(N(omega)-L-arginino)succinate = fumarate + L-arginine. It functions in the pathway amino-acid biosynthesis; L-arginine biosynthesis; L-arginine from L-ornithine and carbamoyl phosphate: step 3/3. This Geobacter sp. (strain M21) protein is Argininosuccinate lyase.